The primary structure comprises 224 residues: Ribulose-phosphate 3-epimerase (224 aa).

A substrate-binding site is contributed by serine 8. A divalent metal cation-binding residues include histidine 31, aspartate 33, and histidine 64. Aspartate 33 acts as the Proton acceptor in catalysis. Substrate is bound by residues histidine 64, 140–143 (GFGG), 173–175 (DGG), and 195–196 (GS). Aspartate 173 provides a ligand contact to a divalent metal cation. The active-site Proton donor is the aspartate 173.

Belongs to the ribulose-phosphate 3-epimerase family. A divalent metal cation serves as cofactor.

It carries out the reaction D-ribulose 5-phosphate = D-xylulose 5-phosphate. It participates in carbohydrate degradation. In terms of biological role, catalyzes the reversible epimerization of D-ribulose 5-phosphate to D-xylulose 5-phosphate. This chain is Ribulose-phosphate 3-epimerase, found in Mycobacterium leprae (strain TN).